A 249-amino-acid polypeptide reads, in one-letter code: Proteasome subunit alpha type-7 (249 aa).

This sequence belongs to the peptidase T1A family. In terms of assembly, the 26S proteasome consists of a 20S proteasome core and two 19S regulatory subunits. The 20S proteasome core is a barrel-shaped complex made of 28 subunits that are arranged in four stacked rings. The two outer rings are each formed by seven alpha subunits, and the two inner rings are formed by seven beta subunits. The proteolytic activity is exerted by three beta-subunits PSMB5, PSMB6 and PSMB7. PSMA7 interacts directly with the PSMG1-PSMG2 heterodimer which promotes 20S proteasome assembly. Interacts with HIF1A. Interacts with RAB7A. Interacts with PRKN. Interacts with ABL1 and ABL2. Interacts with EMAP2. Interacts with MAVS.

The protein resides in the cytoplasm. The protein localises to the nucleus. In terms of biological role, component of the 20S core proteasome complex involved in the proteolytic degradation of most intracellular proteins. This complex plays numerous essential roles within the cell by associating with different regulatory particles. Associated with two 19S regulatory particles, forms the 26S proteasome and thus participates in the ATP-dependent degradation of ubiquitinated proteins. The 26S proteasome plays a key role in the maintenance of protein homeostasis by removing misfolded or damaged proteins that could impair cellular functions, and by removing proteins whose functions are no longer required. Associated with the PA200 or PA28, the 20S proteasome mediates ubiquitin-independent protein degradation. This type of proteolysis is required in several pathways including spermatogenesis (20S-PA200 complex) or generation of a subset of MHC class I-presented antigenic peptides (20S-PA28 complex). Inhibits the transactivation function of HIF-1A under both normoxic and hypoxia-mimicking conditions. The interaction with EMAP2 increases the proteasome-mediated HIF-1A degradation under the hypoxic conditions. Plays a role in hepatitis C virus internal ribosome entry site-mediated translation. Mediates nuclear translocation of the androgen receptor (AR) and thereby enhances androgen-mediated transactivation. Promotes MAVS degradation and thereby negatively regulates MAVS-mediated innate immune response. In Gallus gallus (Chicken), this protein is Proteasome subunit alpha type-7 (PSMA7).